The primary structure comprises 394 residues: UDP-glucose 6-dehydrogenase (394 aa).

NAD(+) contacts are provided by residues 2-19 (KIAIAGSGYVGLSLAVLL), valine 11, aspartate 29, lysine 34, threonine 83, threonine 118, and glutamate 145. Residues 141–145 (EFLRE), lysine 203, asparagine 207, 248–252 (YNNPS), and glycine 256 contribute to the substrate site. Residue tyrosine 258 participates in NAD(+) binding. The Nucleophile role is filled by cysteine 259. Position 262 (lysine 262) interacts with NAD(+). Lysine 313 contacts substrate. Arginine 320 contributes to the NAD(+) binding site.

This sequence belongs to the UDP-glucose/GDP-mannose dehydrogenase family.

The catalysed reaction is UDP-alpha-D-glucose + 2 NAD(+) + H2O = UDP-alpha-D-glucuronate + 2 NADH + 3 H(+). Its pathway is nucleotide-sugar biosynthesis; UDP-alpha-D-glucuronate biosynthesis; UDP-alpha-D-glucuronate from UDP-alpha-D-glucose: step 1/1. Its function is as follows. Catalyzes the formation of UDP-glucuronic acid which is required for capsular hyaluronic acid synthesis. Directly responsible for the transformation of some unencapsulated serotype-3 SP mutants to the encapsulated phenotype. The protein is UDP-glucose 6-dehydrogenase (cap3A) of Streptococcus pneumoniae.